A 489-amino-acid polypeptide reads, in one-letter code: Metalloreductase STEAP2 (489 aa).

Residues 37–40 (SGDF), 59–60 (SR), 92–99 (IHREHYTS), Asn-117, and Ala-150 each bind NADP(+). Trp-151 and Asp-159 together coordinate FAD. Residues 207 to 227 (LFTLWRGPVVVAISLATFFFL) form a helical membrane-spanning segment. Tyr-228 serves as a coordination point for Fe(3+). The chain crosses the membrane as a helical span at residues 258–278 (LPIVAITLLSLVYLAGLLAAA). In terms of domain architecture, Ferric oxidoreductase spans 258–406 (LPIVAITLLS…LGYVALLITT (149 aa)). Gln-280 and Arg-301 together coordinate FAD. A run of 4 helical transmembrane segments spans residues 304-324 (LGLL…CLPM), 358-378 (MYIS…VTSI), 392-412 (FIQS…VLIY), and 431-451 (FVLA…LLLP). Residue His-315 participates in heme b binding. Residue Tyr-318 participates in Fe(3+) binding. FAD-binding residues include Ser-377 and Gln-394. His-408 is a binding site for heme b. Ser-482 carries the post-translational modification Phosphoserine.

Belongs to the STEAP family. Requires FAD as cofactor. Heme b serves as cofactor.

The protein localises to the cell membrane. The protein resides in the endosome membrane. The catalysed reaction is 2 Fe(2+) + NADP(+) + H(+) = 2 Fe(3+) + NADPH. It catalyses the reaction 2 Cu(+) + NADP(+) + H(+) = 2 Cu(2+) + NADPH. Its function is as follows. Integral membrane protein that functions as a NADPH-dependent ferric-chelate reductase, using NADPH from one side of the membrane to reduce a Fe(3+) chelate that is bound on the other side of the membrane. Mediates sequential transmembrane electron transfer from NADPH to FAD and onto heme, and finally to the Fe(3+) chelate. Can also reduce Cu(2+) to Cu(1+). The polypeptide is Metalloreductase STEAP2 (Steap2) (Mus musculus (Mouse)).